Consider the following 1157-residue polypeptide: uncharacterized protein (1157 aa).

A compositionally biased stretch (basic and acidic residues) spans 1–10 (MDPHWKRHDS). Disordered stretches follow at residues 1 to 35 (MDPH…QRFG), 159 to 233 (QTTP…SVEP), and 478 to 498 (KNQS…GKGP). Low complexity-rich tracts occupy residues 18–31 (SPSA…PSSA) and 181–197 (SAGT…NPNF). A compositionally biased stretch (polar residues) spans 208 to 228 (QEWQQSPLESPLSMHSLQESL). The region spanning 501–574 (VWFKPSDKRI…KVEYKAILHD (74 aa)) is the CSD2 domain. Positions 608 to 921 (LRDKLTFMIG…ICVQRQLREA (314 aa)) constitute an RNB domain. In terms of domain architecture, DIS3L2 C-terminal spans 973–1030 (GLVKHKAFVLAVDQEYIDIVIYEFGLERRISLDLLPLSNCDFNEQKHELYLSWRTNAS). The interval 1084-1113 (YSKARGNDSTSKTAKSSSGNQDISGDGKLH) is disordered. Residues 1090-1106 (NDSTSKTAKSSSGNQDI) are compositionally biased toward polar residues.

Belongs to the RNR ribonuclease family.

Its subcellular location is the cytoplasm. This is an uncharacterized protein from Schizosaccharomyces pombe (strain 972 / ATCC 24843) (Fission yeast).